The following is a 97-amino-acid chain: Aspartyl/glutamyl-tRNA(Asn/Gln) amidotransferase subunit C (97 aa).

Belongs to the GatC family. In terms of assembly, heterotrimer of A, B and C subunits.

The catalysed reaction is L-glutamyl-tRNA(Gln) + L-glutamine + ATP + H2O = L-glutaminyl-tRNA(Gln) + L-glutamate + ADP + phosphate + H(+). It carries out the reaction L-aspartyl-tRNA(Asn) + L-glutamine + ATP + H2O = L-asparaginyl-tRNA(Asn) + L-glutamate + ADP + phosphate + 2 H(+). Its function is as follows. Allows the formation of correctly charged Asn-tRNA(Asn) or Gln-tRNA(Gln) through the transamidation of misacylated Asp-tRNA(Asn) or Glu-tRNA(Gln) in organisms which lack either or both of asparaginyl-tRNA or glutaminyl-tRNA synthetases. The reaction takes place in the presence of glutamine and ATP through an activated phospho-Asp-tRNA(Asn) or phospho-Glu-tRNA(Gln). This chain is Aspartyl/glutamyl-tRNA(Asn/Gln) amidotransferase subunit C, found in Synechococcus sp. (strain JA-3-3Ab) (Cyanobacteria bacterium Yellowstone A-Prime).